The primary structure comprises 260 residues: Alpha-acetolactate decarboxylase (260 aa).

This sequence belongs to the alpha-acetolactate decarboxylase family.

The enzyme catalyses (2S)-2-acetolactate + H(+) = (R)-acetoin + CO2. The protein operates within polyol metabolism; (R,R)-butane-2,3-diol biosynthesis; (R,R)-butane-2,3-diol from pyruvate: step 2/3. Its function is as follows. Converts acetolactate into acetoin. In Methylococcus capsulatus (strain ATCC 33009 / NCIMB 11132 / Bath), this protein is Alpha-acetolactate decarboxylase (budA).